Here is a 50-residue protein sequence, read N- to C-terminus: Large ribosomal subunit protein bL33B (50 aa).

This sequence belongs to the bacterial ribosomal protein bL33 family.

This chain is Large ribosomal subunit protein bL33B, found in Mesomycoplasma hyopneumoniae (strain 7448) (Mycoplasma hyopneumoniae).